The chain runs to 342 residues: NADH-quinone oxidoreductase subunit H 1 (342 aa).

The next 8 membrane-spanning stretches (helical) occupy residues 7 to 27, 78 to 98, 120 to 140, 166 to 186, 193 to 213, 245 to 265, 284 to 304, and 322 to 342; these read FLLEKTIIVTAVFTISLVIAM, ALFILGPSIAMMTACLTGAVI, IGVLYIFAVVSIGVYGVMIGG, MGLSIIALVMTTGTLSIGEIV, WWNIVYQPLGFFIFMVCSFAE, LFAEYINMFISSAVMSAFYFG, ILGTLFFFTKIVLFIFLFMWV, and KIMIPMAIINIIITGACILLF.

Belongs to the complex I subunit 1 family. In terms of assembly, NDH-1 is composed of 14 different subunits. Subunits NuoA, H, J, K, L, M, N constitute the membrane sector of the complex.

It localises to the cell inner membrane. The enzyme catalyses a quinone + NADH + 5 H(+)(in) = a quinol + NAD(+) + 4 H(+)(out). Functionally, NDH-1 shuttles electrons from NADH, via FMN and iron-sulfur (Fe-S) centers, to quinones in the respiratory chain. The immediate electron acceptor for the enzyme in this species is believed to be ubiquinone. Couples the redox reaction to proton translocation (for every two electrons transferred, four hydrogen ions are translocated across the cytoplasmic membrane), and thus conserves the redox energy in a proton gradient. This subunit may bind ubiquinone. The chain is NADH-quinone oxidoreductase subunit H 1 from Cytophaga hutchinsonii (strain ATCC 33406 / DSM 1761 / CIP 103989 / NBRC 15051 / NCIMB 9469 / D465).